The chain runs to 354 residues: Serum paraoxonase/arylesterase 2 (354 aa).

Cys-42 and Cys-352 are oxidised to a cystine. Asp-53 and Asp-54 together coordinate Ca(2+). The Proton acceptor role is filled by His-114. Ca(2+)-binding residues include Ile-116, Asn-167, Asp-168, and Asn-223. Asn-254 carries N-linked (GlcNAc...) asparagine glycosylation. Ca(2+) contacts are provided by Asp-268 and Asn-269. Residues Asn-269 and Asn-323 are each glycosylated (N-linked (GlcNAc...) asparagine).

The protein belongs to the paraoxonase family. As to quaternary structure, homotrimer. Ca(2+) is required as a cofactor. In terms of processing, glycosylated. The signal sequence is not cleaved.

It localises to the membrane. It carries out the reaction a phenyl acetate + H2O = a phenol + acetate + H(+). The enzyme catalyses an N-acyl-L-homoserine lactone + H2O = an N-acyl-L-homoserine + H(+). Capable of hydrolyzing lactones and a number of aromatic carboxylic acid esters. In Canis lupus familiaris (Dog), this protein is Serum paraoxonase/arylesterase 2 (PON2).